A 98-amino-acid chain; its full sequence is ESAT-6-like protein EsxK (98 aa).

It belongs to the WXG100 family. CFP-10 subfamily. As to quaternary structure, strongly interacts with EsxL to form a heterodimeric complex under reducing conditions. The complex is regulated by the redox state of EsxL.

The protein resides in the secreted. In Mycobacterium tuberculosis (strain ATCC 25618 / H37Rv), this protein is ESAT-6-like protein EsxK.